Reading from the N-terminus, the 733-residue chain is Putative cyclic nucleotide-gated ion channel 9 (733 aa).

The Cytoplasmic segment spans residues 1–117; that stretch reads MLDCGKKAVK…DKFLLLCNKL (117 aa). The helical transmembrane segment at 118–138 threads the bilayer; the sequence is FVTSCILAVSVDPLFLYLPFV. At 139–151 the chain is on the extracellular side; that stretch reads KDNEKCIGIDRKL. A helical membrane pass occupies residues 152–172; it reads AIIATTLRTVIDAFYLFHMAL. Topologically, residues 173-207 are cytoplasmic; it reads RFRTAFVAPSSRVFGRGELVIDPAQIAKRYLQQYF. A helical transmembrane segment spans residues 208–228; sequence IIDFLSVLPLPQIVVWRFLYI. At 229–239 the chain is on the extracellular side; the sequence is SKGASVLATKR. The helical transmembrane segment at 240–260 threads the bilayer; that stretch reads ALRSIILVQYIPRFIRLYPLS. The Cytoplasmic segment spans residues 261-280; that stretch reads SELKRTAGVFAETAWAGAAY. A helical membrane pass occupies residues 281–301; sequence YLLLYMLASHIVGAIWYLLAL. The Extracellular segment spans residues 302 to 406; it reads ERYNGCWTKV…GQGLETSTYP (105 aa). A helical membrane pass occupies residues 407–427; it reads GEVIFSIALAIAGLLLFALLI. Residues 428–733 are Cytoplasmic-facing; sequence GNMQTYLQSL…EPDFSADDTS (306 aa). Residues 513 to 637 and E584 each bind a nucleoside 3',5'-cyclic phosphate; that span reads LFEN…SRQV. Residues 629–644 are calmodulin-binding; it reads FRRLHSRQVQHTFRFY. The 30-residue stretch at 649-678 folds into the IQ domain; the sequence is RTWAAIFIQAAWRRYVKKKKLEQLRKEEEE.

This sequence belongs to the cyclic nucleotide-gated cation channel (TC 1.A.1.5) family. In terms of assembly, homotetramer or heterotetramer.

The protein resides in the cell membrane. In terms of biological role, putative cyclic nucleotide-gated ion channel. The chain is Putative cyclic nucleotide-gated ion channel 9 (CNGC9) from Arabidopsis thaliana (Mouse-ear cress).